A 156-amino-acid chain; its full sequence is Transcription antitermination protein NusB (156 aa).

The protein belongs to the NusB family.

Its function is as follows. Involved in transcription antitermination. Required for transcription of ribosomal RNA (rRNA) genes. Binds specifically to the boxA antiterminator sequence of the ribosomal RNA (rrn) operons. This is Transcription antitermination protein NusB from Syntrophotalea carbinolica (strain DSM 2380 / NBRC 103641 / GraBd1) (Pelobacter carbinolicus).